Reading from the N-terminus, the 310-residue chain is Hydroxyacylglutathione hydrolase, mitochondrial (310 aa).

Zn(2+) contacts are provided by His-104, His-106, Asp-108, His-109, His-160, and Asp-184. Residues 193–195 (KFF), 223–225 (HEY), and 299–302 (RKEK) contribute to the substrate site. A Zn(2+)-binding site is contributed by His-223.

This sequence belongs to the metallo-beta-lactamase superfamily. Glyoxalase II family. In terms of assembly, monomer. The cofactor is Zn(2+).

The protein resides in the mitochondrion matrix. The protein localises to the cytoplasm. It carries out the reaction an S-(2-hydroxyacyl)glutathione + H2O = a 2-hydroxy carboxylate + glutathione + H(+). The enzyme catalyses (R)-S-lactoylglutathione + H2O = (R)-lactate + glutathione + H(+). In terms of biological role, thiolesterase that catalyzes the hydrolysis of S-D-lactoyl-glutathione to form glutathione and D-lactic acid. In Gallus gallus (Chicken), this protein is Hydroxyacylglutathione hydrolase, mitochondrial (HAGH).